The chain runs to 926 residues: Alanine--tRNA ligase (926 aa).

The Zn(2+) site is built by His-615, His-619, Cys-719, and His-723. The segment at 887-910 (RVGGGGGGPPDFAQGGGPDADALD) is disordered. Over residues 888–904 (VGGGGGGPPDFAQGGGP) the composition is skewed to gly residues.

It belongs to the class-II aminoacyl-tRNA synthetase family. Zn(2+) is required as a cofactor.

The protein localises to the cytoplasm. The catalysed reaction is tRNA(Ala) + L-alanine + ATP = L-alanyl-tRNA(Ala) + AMP + diphosphate. Its function is as follows. Catalyzes the attachment of alanine to tRNA(Ala) in a two-step reaction: alanine is first activated by ATP to form Ala-AMP and then transferred to the acceptor end of tRNA(Ala). Also edits incorrectly charged Ser-tRNA(Ala) and Gly-tRNA(Ala) via its editing domain. This is Alanine--tRNA ligase from Halorubrum lacusprofundi (strain ATCC 49239 / DSM 5036 / JCM 8891 / ACAM 34).